The following is a 473-amino-acid chain: Photosystem II CP43 reaction center protein (473 aa).

Positions methionine 1–glutamate 14 are excised as a propeptide. Threonine 15 is subject to N-acetylthreonine. Phosphothreonine is present on threonine 15. A run of 5 helical transmembrane segments spans residues leucine 69–alanine 93, leucine 134–asparagine 155, lysine 178–threonine 200, lysine 255–serine 275, and tryptophan 291–alanine 312. Glutamate 367 lines the [CaMn4O5] cluster pocket. A helical membrane pass occupies residues arginine 447–proline 471.

Belongs to the PsbB/PsbC family. PsbC subfamily. PSII is composed of 1 copy each of membrane proteins PsbA, PsbB, PsbC, PsbD, PsbE, PsbF, PsbH, PsbI, PsbJ, PsbK, PsbL, PsbM, PsbT, PsbX, PsbY, PsbZ, Psb30/Ycf12, at least 3 peripheral proteins of the oxygen-evolving complex and a large number of cofactors. It forms dimeric complexes. The cofactor is Binds multiple chlorophylls and provides some of the ligands for the Ca-4Mn-5O cluster of the oxygen-evolving complex. It may also provide a ligand for a Cl- that is required for oxygen evolution. PSII binds additional chlorophylls, carotenoids and specific lipids..

Its subcellular location is the plastid. It is found in the chloroplast thylakoid membrane. In terms of biological role, one of the components of the core complex of photosystem II (PSII). It binds chlorophyll and helps catalyze the primary light-induced photochemical processes of PSII. PSII is a light-driven water:plastoquinone oxidoreductase, using light energy to abstract electrons from H(2)O, generating O(2) and a proton gradient subsequently used for ATP formation. This chain is Photosystem II CP43 reaction center protein, found in Helianthus annuus (Common sunflower).